Here is a 149-residue protein sequence, read N- to C-terminus: Nucleoside diphosphate kinase (149 aa).

The ATP site is built by lysine 9, phenylalanine 57, arginine 85, threonine 91, arginine 102, and asparagine 112. Residue histidine 115 is the Pros-phosphohistidine intermediate of the active site.

It belongs to the NDK family. Requires Mg(2+) as cofactor.

Its subcellular location is the cytoplasm. The catalysed reaction is a 2'-deoxyribonucleoside 5'-diphosphate + ATP = a 2'-deoxyribonucleoside 5'-triphosphate + ADP. It catalyses the reaction a ribonucleoside 5'-diphosphate + ATP = a ribonucleoside 5'-triphosphate + ADP. Major role in the synthesis of nucleoside triphosphates other than ATP. The ATP gamma phosphate is transferred to the NDP beta phosphate via a ping-pong mechanism, using a phosphorylated active-site intermediate. This Methanosarcina acetivorans (strain ATCC 35395 / DSM 2834 / JCM 12185 / C2A) protein is Nucleoside diphosphate kinase.